The following is an 81-amino-acid chain: Photosystem I iron-sulfur center (81 aa).

2 consecutive 4Fe-4S ferredoxin-type domains span residues 2 to 31 (SHTV…MIPW) and 39 to 68 (IASS…VRVY). [4Fe-4S] cluster contacts are provided by Cys11, Cys14, Cys17, Cys21, Cys48, Cys51, Cys54, and Cys58.

As to quaternary structure, the eukaryotic PSI reaction center is composed of at least 11 subunits. [4Fe-4S] cluster is required as a cofactor.

The protein resides in the plastid. It localises to the chloroplast thylakoid membrane. The enzyme catalyses reduced [plastocyanin] + hnu + oxidized [2Fe-2S]-[ferredoxin] = oxidized [plastocyanin] + reduced [2Fe-2S]-[ferredoxin]. Its function is as follows. Apoprotein for the two 4Fe-4S centers FA and FB of photosystem I (PSI); essential for photochemical activity. FB is the terminal electron acceptor of PSI, donating electrons to ferredoxin. The C-terminus interacts with PsaA/B/D and helps assemble the protein into the PSI complex. Required for binding of PsaD and PsaE to PSI. PSI is a plastocyanin-ferredoxin oxidoreductase, converting photonic excitation into a charge separation, which transfers an electron from the donor P700 chlorophyll pair to the spectroscopically characterized acceptors A0, A1, FX, FA and FB in turn. This is Photosystem I iron-sulfur center from Chaetosphaeridium globosum (Charophycean green alga).